Here is a 365-residue protein sequence, read N- to C-terminus: Phosphatidylcholine:ceramide cholinephosphotransferase 2 (365 aa).

The segment covering 1-14 (MDIIETAKLEEHLE) has biased composition (basic and acidic residues). A disordered region spans residues 1–52 (MDIIETAKLEEHLENQPSDPTNTYARPAEPVEEENKNGNGKPKSLSSGLRKG). Residues 15–24 (NQPSDPTNTY) show a composition bias toward polar residues. Transmembrane regions (helical) follow at residues 80-100 (GIAFIYAVFNLVLTTVMITVV), 128-148 (FSVSEINGIILVGLWITQWLF), 159-179 (FCFIIGTLYLYRCITMYVTTL), and 206-226 (LISGGGLSITGSHILCGDFLF). Residue His-229 is part of the active site. The chain crosses the membrane as a helical span at residues 248 to 268 (FWWYHLICWLLSAAGIICILV). Residues His-272 and Asp-276 contribute to the active site. The chain crosses the membrane as a helical span at residues 275–295 (IDVIIAYYITTRLFWWYHSMA). Residues 296–365 (NEKNLKVSSQ…KIGEDNEKST (70 aa)) are Cytoplasmic-facing. S-palmitoyl cysteine attachment occurs at residues Cys-331, Cys-332, Cys-343, and Cys-348.

This sequence belongs to the sphingomyelin synthase family. Post-translationally, palmitoylated on Cys-331, Cys-332, Cys-343 and Cys-348; which plays an important role in plasma membrane localization. In terms of tissue distribution, brain, heart, kidney, liver, muscle and stomach. Also expressed in a number of cell lines such as carcinoma HeLa cells, hepatoma Hep-G2 cells, and colon carcinoma Caco-2 cells.

It is found in the cell membrane. Its subcellular location is the golgi apparatus membrane. The catalysed reaction is an N-acylsphing-4-enine + a 1,2-diacyl-sn-glycero-3-phosphocholine = a sphingomyelin + a 1,2-diacyl-sn-glycerol. The enzyme catalyses an N-acylsphinganine + a 1,2-diacyl-sn-glycero-3-phosphocholine = an N-acylsphinganine-1-phosphocholine + a 1,2-diacyl-sn-glycerol. It carries out the reaction an N-acyl-(4R)-4-hydroxysphinganine + a 1,2-diacyl-sn-glycero-3-phosphocholine = an N-acyl-(4R)-4-hydroxysphinganine-phosphocholine + a 1,2-diacyl-sn-glycerol. It catalyses the reaction an N-acylsphinganine + a 1,2-diacyl-sn-glycero-3-phosphoethanolamine = an N-acylsphinganine-1-phosphoethanolamine + a 1,2-diacyl-sn-glycerol. The catalysed reaction is an N-acyl-(4R)-4-hydroxysphinganine + a 1,2-diacyl-sn-glycero-3-phosphoethanolamine = an N-acyl-(4R)-4-hydroxysphinganine-1-phosphoethanolamine + a 1,2-diacyl-sn-glycerol. The enzyme catalyses an N-acylsphing-4-enine + a 1,2-diacyl-sn-glycero-3-phosphoethanolamine = an N-acylsphing-4-enine 1-phosphoethanolamine + a 1,2-diacyl-sn-glycerol. It carries out the reaction 1,2-dihexadecanoyl-sn-glycero-3-phosphocholine + an N-acylsphing-4-enine = 1,2-dihexadecanoyl-sn-glycerol + a sphingomyelin. It catalyses the reaction 1-(9Z-octadecenoyl)-2-acyl-sn-3-glycerol + a sphingomyelin = a 1-(9Z-octadecenoyl)-2-acyl-sn-glycero-3-phosphocholine + an N-acylsphing-4-enine. The catalysed reaction is N-hexadecanoylsphinganine + a 1,2-diacyl-sn-glycero-3-phosphocholine = N-hexadecanoyl-sphinganine-1-phosphocholine + a 1,2-diacyl-sn-glycerol. The enzyme catalyses N-hexadecanoyl-(4R)-hydroxysphinganine + a 1,2-diacyl-sn-glycero-3-phosphocholine = N-hexadecanoyl-(4R)-hydroxysphinganine-phosphocholine + a 1,2-diacyl-sn-glycerol. It carries out the reaction N-hexadecanoylsphinganine + a 1,2-diacyl-sn-glycero-3-phosphoethanolamine = N-hexadecanoyl-sphinganine-1-phosphoethanolamine + a 1,2-diacyl-sn-glycerol. It catalyses the reaction N-hexadecanoyl-(4R)-hydroxysphinganine + a 1,2-diacyl-sn-glycero-3-phosphoethanolamine = N-hexadecanoyl-(4R)-hydroxysphinganine-1-phosphoethanolamine + a 1,2-diacyl-sn-glycerol. Its pathway is sphingolipid metabolism. With respect to regulation, inhibited by bacterial PC-phospholipase C inhibitor D609. Functionally, sphingomyelin synthase that primarily contributes to sphingomyelin synthesis and homeostasis at the plasma membrane. Catalyzes the reversible transfer of phosphocholine moiety in sphingomyelin biosynthesis: in the forward reaction transfers phosphocholine head group of phosphatidylcholine (PC) on to ceramide (CER) to form ceramide phosphocholine (sphingomyelin, SM) and diacylglycerol (DAG) as by-product, and in the reverse reaction transfers phosphocholine from SM to DAG to form PC and CER. The direction of the reaction appears to depend on the levels of CER and DAG in the plasma membrane. Does not use free phosphorylcholine or CDP-choline as donors. Can also transfer phosphoethanolamine head group of phosphatidylethanolamine (PE) on to ceramide (CER) to form ceramide phosphoethanolamine (CPE). Regulates receptor-mediated signal transduction via mitogenic DAG and proapoptotic CER, as well as via SM, a structural component of membrane rafts that serve as platforms for signal transduction and protein sorting. To a lesser extent, plays a role in secretory transport via regulation of DAG pool at the Golgi apparatus and its downstream effects on PRKD1. Required for normal bone matrix mineralization. This Homo sapiens (Human) protein is Phosphatidylcholine:ceramide cholinephosphotransferase 2.